Consider the following 206-residue polypeptide: NADH-quinone oxidoreductase subunit C (206 aa).

The protein belongs to the complex I 30 kDa subunit family. NDH-1 is composed of 14 different subunits. Subunits NuoB, C, D, E, F, and G constitute the peripheral sector of the complex.

It is found in the cell inner membrane. It carries out the reaction a quinone + NADH + 5 H(+)(in) = a quinol + NAD(+) + 4 H(+)(out). In terms of biological role, NDH-1 shuttles electrons from NADH, via FMN and iron-sulfur (Fe-S) centers, to quinones in the respiratory chain. The immediate electron acceptor for the enzyme in this species is believed to be ubiquinone. Couples the redox reaction to proton translocation (for every two electrons transferred, four hydrogen ions are translocated across the cytoplasmic membrane), and thus conserves the redox energy in a proton gradient. The protein is NADH-quinone oxidoreductase subunit C of Bordetella avium (strain 197N).